The following is a 534-amino-acid chain: 2,3-bisphosphoglycerate-independent phosphoglycerate mutase (534 aa).

The Mn(2+) site is built by aspartate 15 and serine 65. Catalysis depends on serine 65, which acts as the Phosphoserine intermediate. Substrate-binding positions include histidine 126, 156-157 (RD), arginine 188, arginine 194, 261-264 (RPDR), and lysine 334. Mn(2+) is bound by residues aspartate 401, histidine 405, aspartate 442, histidine 443, and histidine 460.

Belongs to the BPG-independent phosphoglycerate mutase family. Mn(2+) serves as cofactor.

The protein localises to the plastid. It localises to the chloroplast. The enzyme catalyses (2R)-2-phosphoglycerate = (2R)-3-phosphoglycerate. It participates in carbohydrate degradation; glycolysis; pyruvate from D-glyceraldehyde 3-phosphate: step 3/5. Catalyzes the interconversion of 2-phosphoglycerate and 3-phosphoglycerate. The protein is 2,3-bisphosphoglycerate-independent phosphoglycerate mutase of Pyropia yezoensis (Susabi-nori).